A 566-amino-acid polypeptide reads, in one-letter code: Proline--tRNA ligase 1 (566 aa).

It belongs to the class-II aminoacyl-tRNA synthetase family. ProS type 1 subfamily. Homodimer.

The protein localises to the cytoplasm. It catalyses the reaction tRNA(Pro) + L-proline + ATP = L-prolyl-tRNA(Pro) + AMP + diphosphate. In terms of biological role, catalyzes the attachment of proline to tRNA(Pro) in a two-step reaction: proline is first activated by ATP to form Pro-AMP and then transferred to the acceptor end of tRNA(Pro). As ProRS can inadvertently accommodate and process non-cognate amino acids such as alanine and cysteine, to avoid such errors it has two additional distinct editing activities against alanine. One activity is designated as 'pretransfer' editing and involves the tRNA(Pro)-independent hydrolysis of activated Ala-AMP. The other activity is designated 'posttransfer' editing and involves deacylation of mischarged Ala-tRNA(Pro). The misacylated Cys-tRNA(Pro) is not edited by ProRS. The sequence is that of Proline--tRNA ligase 1 from Bacillus thuringiensis subsp. konkukian (strain 97-27).